The chain runs to 1503 residues: Lysine-specific demethylase 5B-B (1503 aa).

The region spanning 15-56 is the JmjN domain; it reads CPVFEPSWEEFKDPFAFINKIRPIAEKTGICKVRPPPDWQPP. Residues 80–170 enclose the ARID domain; the sequence is TRVKLNFLDQ…ILYPYNLFQS (91 aa). Over residues 202–211 the composition is skewed to polar residues; it reads VPLQPSNTSA. 2 disordered regions span residues 202 to 223 and 268 to 287; these read VPLQ…KTES and IKEL…NIPP. Residues 268-278 are compositionally biased toward basic and acidic residues; the sequence is IKELNPEPEKS. The PHD-type 1 zinc-finger motif lies at 295 to 345; sequence LYVCLVCGKGNDEDRLLLCDGCDDSYHTFCLIPPLTDVPKGDWRCPKCLTQ. Residues 439-605 form the JmjC domain; it reads KYLQCGWNLN…LGRQCVDHYR (167 aa). Fe cation contacts are provided by histidine 485, aspartate 488, and histidine 573. The PHD-type 2 zinc-finger motif lies at 1168 to 1216; the sequence is LKVCVCQKPAMGAMLQCELCRDAFHSVCVRGPSDPLDPEAWLCPLCLRS. Disordered regions lie at residues 1362–1381 and 1403–1442; these read TNTS…TETD and ERGT…DSEE. The PHD-type 3 zinc-finger motif lies at 1444–1497; that stretch reads MTLCPAESCLQPEGEEVDWVQCDCCNRWFHMICVGVSAELAAEEDYMCVSCSTS.

Belongs to the JARID1 histone demethylase family. Fe(2+) is required as a cofactor.

The protein resides in the nucleus. The enzyme catalyses N(6),N(6),N(6)-trimethyl-L-lysyl(4)-[histone H3] + 3 2-oxoglutarate + 3 O2 = L-lysyl(4)-[histone H3] + 3 formaldehyde + 3 succinate + 3 CO2. Histone demethylase that demethylates 'Lys-4' of histone H3, thereby playing a central role in histone code. Does not demethylate histone H3 'Lys-9' or H3 'Lys-27'. Demethylates trimethylated, dimethylated and monomethylated H3 'Lys-4'. Acts as a transcriptional corepressor. This Danio rerio (Zebrafish) protein is Lysine-specific demethylase 5B-B (kdm5bb).